The sequence spans 230 residues: Protein FAM3A (230 aa).

The N-terminal stretch at 1 to 33 (MRLAGPLRIVALVVSVGLTWIVVSILLGGPGSG) is a signal peptide. Cystine bridges form between C59/C87 and C65/C222. A GG-type lectin domain is found at 68–226 (EHLAFRVVSG…LEMEGCIPRR (159 aa)).

It belongs to the FAM3 family.

Its subcellular location is the secreted. The protein is Protein FAM3A (FAM3A) of Pongo abelii (Sumatran orangutan).